We begin with the raw amino-acid sequence, 527 residues long: Flagellar radial spoke protein 5 (527 aa).

Residues 1–22 (MSEPGEEPVAAPAGPAPDPVLN) are disordered. The stretch at 101 to 153 (RKWNELTIQAKQLEQEVAGLKGPDAEAKQAELENVKVQIADAEAAVAEVKQSF) forms a coiled coil. Asymmetric dimethylarginine occurs at positions 191 and 366.

This sequence belongs to the aldo/keto reductase family. Post-translationally, asymmetrically dimethylated at Arg-191 and Arg-366 during flagellum resorption. Probably methylated by PRMT1.

It is found in the cytoplasm. Its subcellular location is the cytoskeleton. It localises to the flagellum axoneme. Functionally, flagellar radial spokes contribute to the regulation of dynein arm activity and thus the pattern of flagellar bending. They consist of a thin stalk, which is attached to the a subfiber of the outer doublet microtubule, and a bulbous head, which is attached to the stalk and appears to interact with the projections from the central pair of microtubules. The protein is Flagellar radial spoke protein 5 of Chlamydomonas reinhardtii (Chlamydomonas smithii).